The following is a 54-amino-acid chain: UPF0391 membrane protein Pfl01_0044 (54 aa).

The next 2 membrane-spanning stretches (helical) occupy residues 4 to 24 (WAITFLIIAIIAAVLGFGGIA) and 29 to 49 (GIAKILFVVFLVMFIASFFFG).

Belongs to the UPF0391 family.

It is found in the cell membrane. This is UPF0391 membrane protein Pfl01_0044 from Pseudomonas fluorescens (strain Pf0-1).